Consider the following 348-residue polypeptide: Photosystem II protein D1 (348 aa).

3 helical membrane-spanning segments follow: residues 33–50 (YIGW…LATV), 122–137 (HFIF…EWEF), and 146–160 (WIFV…ASCA). Position 122 (H122) interacts with chlorophyll a. Residue W130 coordinates pheophytin a. [CaMn4O5] cluster-binding residues include D174 and E193. Residues 201 to 222 (FHILGVAGVFGGSLFSAMHGSL) form a helical membrane-spanning segment. Residue H202 coordinates chlorophyll a. A quinone is bound by residues H219 and 268–269 (SF). A Fe cation-binding site is contributed by H219. H276 provides a ligand contact to Fe cation. The chain crosses the membrane as a helical span at residues 278–292 (FLAAWPVIGIWFTAL). H336, E337, D346, and A348 together coordinate [CaMn4O5] cluster.

Belongs to the reaction center PufL/M/PsbA/D family. In terms of assembly, PSII is composed of 1 copy each of membrane proteins PsbA, PsbB, PsbC, PsbD, PsbE, PsbF, PsbH, PsbI, PsbJ, PsbK, PsbL, PsbM, PsbT, PsbX, PsbY, PsbZ, Psb30/Ycf12, at least 3 peripheral proteins of the oxygen-evolving complex and a large number of cofactors. It forms dimeric complexes. Requires The D1/D2 heterodimer binds P680, chlorophylls that are the primary electron donor of PSII, and subsequent electron acceptors. It shares a non-heme iron and each subunit binds pheophytin, quinone, additional chlorophylls, carotenoids and lipids. D1 provides most of the ligands for the Mn4-Ca-O5 cluster of the oxygen-evolving complex (OEC). There is also a Cl(-1) ion associated with D1 and D2, which is required for oxygen evolution. The PSII complex binds additional chlorophylls, carotenoids and specific lipids. as cofactor. Post-translationally, tyr-165 forms a radical intermediate that is referred to as redox-active TyrZ, YZ or Y-Z.

Its subcellular location is the plastid. The protein localises to the chloroplast thylakoid membrane. It catalyses the reaction 2 a plastoquinone + 4 hnu + 2 H2O = 2 a plastoquinol + O2. Functionally, photosystem II (PSII) is a light-driven water:plastoquinone oxidoreductase that uses light energy to abstract electrons from H(2)O, generating O(2) and a proton gradient subsequently used for ATP formation. It consists of a core antenna complex that captures photons, and an electron transfer chain that converts photonic excitation into a charge separation. The D1/D2 (PsbA/PsbD) reaction center heterodimer binds P680, the primary electron donor of PSII as well as several subsequent electron acceptors. The sequence is that of Photosystem II protein D1 from Heterocapsa rotundata (Dinoflagellate).